Here is a 393-residue protein sequence, read N- to C-terminus: MLKVIARRIDQFINSQSAGGVLLALSALVALVISNSPWRSYYQQFLQIPGSVKMGADWLLLSKPMLIWINDLWMAVFFFLVGLEIKRELLNGELASLKQAMLPAVAALGGMAVPALIYAAINWGEPVGLRGWGIPMATDIAFALGLLVLLGSRVPTSLKVFLTAVAIIDDLGAILVIAFFYTDNLSPTMLLAAGLGALVLLGLNRARVMAVGPYVVVGLVIWVCVLKSGIHATLAGVITALAIPLADGKGGSPLERAEHALQPWVAFLVLPVFAFANAGVSLQGVTLATLTQTVPLGIAFGLLIGKPIGVFGASWLLIRLTDAQLPDQCRWSQFFGVCVLCGVGFTMSLFIGSLAFEGADAAYEVQVKIGVLLGSLLSGAAGVALLLASRKAV.

11 helical membrane-spanning segments follow: residues 18–38, 65–85, 101–121, 131–151, 160–180, 184–204, 210–230, 260–280, 298–318, 334–354, and 369–389; these read AGGVLLALSALVALVISNSPW, MLIWINDLWMAVFFFLVGLEI, MLPAVAALGGMAVPALIYAAI, GWGIPMATDIAFALGLLVLLG, VFLTAVAIIDDLGAILVIAFF, NLSPTMLLAAGLGALVLLGLN, AVGPYVVVGLVIWVCVLKSGI, ALQPWVAFLVLPVFAFANAGV, IAFGLLIGKPIGVFGASWLLI, FFGVCVLCGVGFTMSLFIGSL, and IGVLLGSLLSGAAGVALLLAS.

This sequence belongs to the NhaA Na(+)/H(+) (TC 2.A.33) antiporter family.

It localises to the cell inner membrane. It carries out the reaction Na(+)(in) + 2 H(+)(out) = Na(+)(out) + 2 H(+)(in). Functionally, na(+)/H(+) antiporter that extrudes sodium in exchange for external protons. This chain is Na(+)/H(+) antiporter NhaA, found in Albidiferax ferrireducens (strain ATCC BAA-621 / DSM 15236 / T118) (Rhodoferax ferrireducens).